Reading from the N-terminus, the 195-residue chain is Nuclear transcription factor Y subunit C-10 (195 aa).

Positions 1–24 (MRRPKSSHVRMEPVAPRSHNTMPM) are disordered.

This sequence belongs to the NFYC/HAP5 subunit family. Heterotrimeric transcription factor composed of three components, NF-YA, NF-YB and NF-YC. NF-YB and NF-YC must interact and dimerize for NF-YA association and DNA binding.

It is found in the nucleus. In terms of biological role, stimulates the transcription of various genes by recognizing and binding to a CCAAT motif in promoters. The chain is Nuclear transcription factor Y subunit C-10 (NFYC10) from Arabidopsis thaliana (Mouse-ear cress).